A 180-amino-acid polypeptide reads, in one-letter code: Large ribosomal subunit protein uL18m (180 aa).

This sequence belongs to the universal ribosomal protein uL18 family. In terms of assembly, component of the mitochondrial ribosome large subunit (39S) which comprises a 16S rRNA and about 50 distinct proteins.

It localises to the mitochondrion. Functionally, together with thiosulfate sulfurtransferase (TST), acts as a mitochondrial import factor for the cytosolic 5S rRNA. The precursor form shows RNA chaperone activity; is able to fold the 5S rRNA into an import-competent conformation that is recognized by rhodanese (TST). Both the cytoplasmic and mitochondrial forms are able to bind to the helix IV-loop D in the gamma domain of the 5S rRNA. The polypeptide is Large ribosomal subunit protein uL18m (MRPL18) (Bos taurus (Bovine)).